A 303-amino-acid polypeptide reads, in one-letter code: Glycine--tRNA ligase alpha subunit (303 aa).

This sequence belongs to the class-II aminoacyl-tRNA synthetase family. In terms of assembly, tetramer of two alpha and two beta subunits.

The protein localises to the cytoplasm. The enzyme catalyses tRNA(Gly) + glycine + ATP = glycyl-tRNA(Gly) + AMP + diphosphate. This is Glycine--tRNA ligase alpha subunit from Salmonella arizonae (strain ATCC BAA-731 / CDC346-86 / RSK2980).